Consider the following 480-residue polypeptide: Glutamyl-tRNA(Gln) amidotransferase subunit A (480 aa).

Active-site charge relay system residues include Lys-76 and Ser-151. Ser-175 functions as the Acyl-ester intermediate in the catalytic mechanism.

The protein belongs to the amidase family. GatA subfamily. Heterotrimer of A, B and C subunits.

The enzyme catalyses L-glutamyl-tRNA(Gln) + L-glutamine + ATP + H2O = L-glutaminyl-tRNA(Gln) + L-glutamate + ADP + phosphate + H(+). Allows the formation of correctly charged Gln-tRNA(Gln) through the transamidation of misacylated Glu-tRNA(Gln) in organisms which lack glutaminyl-tRNA synthetase. The reaction takes place in the presence of glutamine and ATP through an activated gamma-phospho-Glu-tRNA(Gln). In Exiguobacterium sibiricum (strain DSM 17290 / CCUG 55495 / CIP 109462 / JCM 13490 / 255-15), this protein is Glutamyl-tRNA(Gln) amidotransferase subunit A.